Reading from the N-terminus, the 196-residue chain is Nucleoid occlusion factor SlmA (196 aa).

Residues 7–68 (TNRREEILQA…GLIEFIEEAL (62 aa)) form the HTH tetR-type domain. The H-T-H motif DNA-binding region spans 31–50 (TTAKLAKQVGVSEAALYRHF). Residues 110–142 (HALMFENERLRDRINQLFERIETQLRQILRERK) adopt a coiled-coil conformation.

This sequence belongs to the nucleoid occlusion factor SlmA family. In terms of assembly, homodimer. Interacts with FtsZ.

The protein resides in the cytoplasm. The protein localises to the nucleoid. Its function is as follows. Required for nucleoid occlusion (NO) phenomenon, which prevents Z-ring formation and cell division over the nucleoid. Acts as a DNA-associated cell division inhibitor that binds simultaneously chromosomal DNA and FtsZ, and disrupts the assembly of FtsZ polymers. SlmA-DNA-binding sequences (SBS) are dispersed on non-Ter regions of the chromosome, preventing FtsZ polymerization at these regions. The sequence is that of Nucleoid occlusion factor SlmA from Vibrio campbellii (strain ATCC BAA-1116).